The sequence spans 357 residues: UPF0283 membrane protein HSM_0945 (357 aa).

Transmembrane regions (helical) follow at residues 67 to 87, 96 to 116, and 213 to 233; these read LMAT…QWLV, IAFV…GTII, and AVES…MFFI.

This sequence belongs to the UPF0283 family.

The protein resides in the cell inner membrane. This chain is UPF0283 membrane protein HSM_0945, found in Histophilus somni (strain 2336) (Haemophilus somnus).